A 57-amino-acid chain; its full sequence is Large ribosomal subunit protein bL32A (57 aa).

Positions 1 to 22 (MAVPARRTSKTKKRLRRTHEKL) are disordered. Positions 7 to 20 (RTSKTKKRLRRTHE) are enriched in basic residues.

The protein belongs to the bacterial ribosomal protein bL32 family.

This Enterococcus faecalis (strain ATCC 700802 / V583) protein is Large ribosomal subunit protein bL32A (rpmF1).